The sequence spans 273 residues: MGSKEDVGKGCPAAGGVSSFTIQSILGGGPSEAPREPAGWPARKRSLSVSSEEEEPEEGWKAPACFCPDPHGPKEPSPKHHTPIPFPCLGTPKGSGGAGPAASERTPFLSPSHPDFKEEKERLLPAGSPSPGPERPRDGGAERQTGAAKKKTRTVFSRSQVYQLESTFDMKRYLSSSERACLASSLQLTETQVKTWFQNRRNKWKRQLSAELEAANMAHASAQTLVGMPLVFRDSSLLRVPVPRSLAFPAPLYYPSSNLSALPLYNLYNKLDY.

Residues 1–154 (MGSKEDVGKG…TGAAKKKTRT (154 aa)) are disordered. A compositionally biased stretch (basic and acidic residues) spans 114–123 (PDFKEEKERL). The segment at residues 149–208 (KKKTRTVFSRSQVYQLESTFDMKRYLSSSERACLASSLQLTETQVKTWFQNRRNKWKRQL) is a DNA-binding region (homeobox).

It belongs to the HMX homeobox family. As to expression, expressed in the developing CNS, including a specific expression in vestibular structures throughout inner ear development.

It localises to the nucleus. Functionally, transcription factor involved in specification of neuronal cell types and which is required for inner ear and hypothalamus development. This is Homeobox protein HMX2 (Hmx2) from Mus musculus (Mouse).